The following is a 121-amino-acid chain: Large ribosomal subunit protein uL14c (121 aa).

This sequence belongs to the universal ribosomal protein uL14 family. As to quaternary structure, part of the 50S ribosomal subunit.

The protein resides in the plastid. It localises to the chloroplast. Its function is as follows. Binds to 23S rRNA. The protein is Large ribosomal subunit protein uL14c of Nephroselmis olivacea (Green alga).